Reading from the N-terminus, the 596-residue chain is Nucleotidyltransferase lcsQ (596 aa).

The N-terminal 22 residues, 1–22, are a transit peptide targeting the mitochondrion; sequence MLLRLSPSRMALKRKLDSFLRN. The disordered stretch occupies residues 475-504; sequence IVAHPGKPSQPADVPETPLSSGASKSKNLD.

This sequence belongs to the tRNA nucleotidyltransferase/poly(A) polymerase family.

The protein localises to the mitochondrion. Functionally, nucleotidyltransferase; part of the gene cluster that mediates the biosynthesis of the lipopeptide antibiotics leucinostatins that show extensive biological activities, including antimalarial, antiviral, antibacterial, antifungal, and antitumor activities, as well as phytotoxic. The function of lcsQ within the leucinostatins biosynthesis has not been identified yet. This chain is Nucleotidyltransferase lcsQ, found in Purpureocillium lilacinum (Paecilomyces lilacinus).